Consider the following 556-residue polypeptide: Formate--tetrahydrofolate ligase (556 aa).

65–72 (TPAGEGKS) contributes to the ATP binding site.

Belongs to the formate--tetrahydrofolate ligase family.

The catalysed reaction is (6S)-5,6,7,8-tetrahydrofolate + formate + ATP = (6R)-10-formyltetrahydrofolate + ADP + phosphate. The protein operates within one-carbon metabolism; tetrahydrofolate interconversion. The sequence is that of Formate--tetrahydrofolate ligase from Clostridium acetobutylicum (strain ATCC 824 / DSM 792 / JCM 1419 / IAM 19013 / LMG 5710 / NBRC 13948 / NRRL B-527 / VKM B-1787 / 2291 / W).